We begin with the raw amino-acid sequence, 206 residues long: Ribosomal RNA small subunit methyltransferase G (206 aa).

S-adenosyl-L-methionine contacts are provided by residues G73, L78, 124–125 (VE), and R139.

Belongs to the methyltransferase superfamily. RNA methyltransferase RsmG family.

It localises to the cytoplasm. The catalysed reaction is guanosine(527) in 16S rRNA + S-adenosyl-L-methionine = N(7)-methylguanosine(527) in 16S rRNA + S-adenosyl-L-homocysteine. Specifically methylates the N7 position of guanine in position 527 of 16S rRNA. The polypeptide is Ribosomal RNA small subunit methyltransferase G (Sodalis glossinidius (strain morsitans)).